The sequence spans 1117 residues: Leucine-rich repeats and immunoglobulin-like domains protein 3 (1117 aa).

The N-terminal stretch at 1-24 (MGAPGLRAATAALGLLLCAGLGRA) is a signal peptide. The LRRNT domain occupies 38–74 (LLDDDAQRPCPAACHCLGDLLDCSRRRLVRLPDPLPA). LRR repeat units lie at residues 75-98 (WVTR…SHLQ), 99-120 (SLQE…GSIS), 122-143 (NIRQ…QLEA), 146-168 (SLET…PPLQ), 169-189 (LKYL…YFDN), 193-214 (TLLV…MFKL), 216-237 (QLQH…TFQG), 240-261 (ALKS…AFWG), 264-285 (NMEV…WLYG), 288-309 (MLRE…AWEF), 312-333 (KLSE…SFLG), 336-357 (LLNA…AFRG), 360-382 (SLKT…SGAF), 387-408 (RLRQ…AFAG), and 411-432 (TLEH…AFSQ). Asn-156 is a glycosylation site (N-linked (GlcNAc...) asparagine). Asn-274 carries an N-linked (GlcNAc...) asparagine glycan. Asn-442 and Asn-469 each carry an N-linked (GlcNAc...) asparagine glycan. The LRRCT domain maps to 444–495 (SSLLCDCQLRWLPQWVAENNFQSFVNASCAHPQLLKGRSIFTVSPDGFVCDD). Ig-like C2-type domains lie at 499–598 (PQIT…AKLT), 603–692 (PSFT…ATLT), and 697–783 (PSFL…VRLS). Cystine bridges form between Cys-520/Cys-581 and Cys-624/Cys-676. 2 N-linked (GlcNAc...) asparagine glycosylation sites follow: Asn-688 and Asn-729. Cys-718 and Cys-767 are disulfide-bonded. The helical transmembrane segment at 810–830 (VVIIAVVCCVVGTSLVWVVII) threads the bilayer. Asn-1014 is a glycosylation site (N-linked (GlcNAc...) asparagine). The tract at residues 1019-1093 (DFSTGPEPGS…KERTDFREEN (75 aa)) is disordered. Over residues 1083–1093 (DKERTDFREEN) the composition is skewed to basic and acidic residues.

Interacts with EGFR, ERBB2 and ERBB4 (in vitro). Widely expressed.

It localises to the cell membrane. It is found in the cytoplasmic vesicle membrane. Functionally, plays a role in craniofacial and inner ear morphogenesis during embryonic development. Acts within the otic vesicle epithelium to control formation of the lateral semicircular canal in the inner ear, possibly by restricting the expression of NTN1. The chain is Leucine-rich repeats and immunoglobulin-like domains protein 3 (Lrig3) from Mus musculus (Mouse).